A 133-amino-acid polypeptide reads, in one-letter code: Large ribosomal subunit protein uL15 (133 aa).

The tract at residues 1-57 (MALEKLTPAAGSTHATKRIGRGQGSGNGKTAGKGNKGQRARKGYNEKRGFEGGQQPL) is disordered. The span at 21 to 35 (RGQGSGNGKTAGKGN) shows a compositional bias: gly residues.

Belongs to the universal ribosomal protein uL15 family. Part of the 50S ribosomal subunit.

Binds to the 23S rRNA. In Campylobacter concisus (strain 13826), this protein is Large ribosomal subunit protein uL15.